We begin with the raw amino-acid sequence, 159 residues long: Neuroglobin (159 aa).

The region spanning 3–151 is the Globin domain; it reads KLSEKDKGLI…VVSAMTRGWA (149 aa). Positions 66 and 98 each coordinate heme b.

It belongs to the globin family. In terms of assembly, monomer. Homodimers and homotetramers. Mainly monomeric but also detected as part of homodimers and homotetramers. As to expression, detected in brain, eye and gill, but not in muscle and blood (at protein level). Particularly high expression in the periventral zone of tectum opticum, with significant expression detected in white matter, preglomerular nucleus, posterior tubular nucleus, torus longitudinalis, hypothalamus, pituitary gland, posterior tuberculum, hypothalamus, synencephalon and formatio reticularis. Detected also in brain regions of the visual system, predominantly in parts of tectum opticum and torus semicircularis, area dorsalis telencephali and medulla oblongata. Strong expression observed in sensory epithelium of peripheral olfactory organ, and outer and inner nuclear layers and ganglion cell layer of retina.

The protein resides in the cytoplasm. The protein localises to the cytosol. It localises to the mitochondrion matrix. The enzyme catalyses Fe(III)-heme b-[protein] + nitric oxide + H2O = Fe(II)-heme b-[protein] + nitrite + 2 H(+). In terms of biological role, monomeric globin with a bis-histidyl six-coordinate heme-iron atom through which it can bind dioxygen, carbon monoxide and nitric oxide. Could help transport oxygen and increase its availability to the metabolically active neuronal tissues, though its low quantity in tissues as well as its high affinity for dioxygen, which may limit its oxygen-releasing ability, argue against it. The ferrous/deoxygenated form exhibits a nitrite reductase activity and it could produce nitric oxide which in turn inhibits cellular respiration in response to hypoxia. In its ferrous/deoxygenated state, it may also exhibit GDI (Guanine nucleotide Dissociation Inhibitor) activity toward heterotrimeric G-alpha proteins, thereby regulating signal transduction to facilitate neuroprotective responses in the wake of hypoxia and associated oxidative stress. This is Neuroglobin (ngb) from Danio rerio (Zebrafish).